The primary structure comprises 428 residues: Zinc-type alcohol dehydrogenase B (428 aa).

Zn(2+) is bound by residues C116, H137, C167, C170, C173, and C181. An N6-benzoyllysine modification is found at K393.

The protein belongs to the zinc-containing alcohol dehydrogenase family. Class-III subfamily. Homodimer. Requires Zn(2+) as cofactor. Post-translationally, benzoylation at lys-393 by gcnE leads to the activation od adhB.

The catalysed reaction is a primary alcohol + NAD(+) = an aldehyde + NADH + H(+). It catalyses the reaction a secondary alcohol + NAD(+) = a ketone + NADH + H(+). Its function is as follows. Zinc-type alcohol dehydrogenase involved in development, secondary metabolism, pathogenicity, and stress response. Specifically controls the formation of sclerotia and the biosynthesis of aflatoxin. Contribute to seed colonization of A flavus on host maize seed. The polypeptide is Zinc-type alcohol dehydrogenase B (Aspergillus flavus (strain ATCC 200026 / FGSC A1120 / IAM 13836 / NRRL 3357 / JCM 12722 / SRRC 167)).